We begin with the raw amino-acid sequence, 200 residues long: Inner membrane-spanning protein YciB (200 aa).

6 helical membrane-spanning segments follow: residues 1–21 (MPPL…FFAN), 37–57 (IGAP…IALA), 66–86 (LPIM…LTLW), 103–123 (LFGG…GYVF), 136–156 (KLTL…EIVW), and 167–187 (FKVW…MPLI).

This sequence belongs to the YciB family.

The protein resides in the cell inner membrane. Functionally, plays a role in cell envelope biogenesis, maintenance of cell envelope integrity and membrane homeostasis. The polypeptide is Inner membrane-spanning protein YciB (Brucella suis biovar 1 (strain 1330)).